Here is a 169-residue protein sequence, read N- to C-terminus: UPF0251 protein MM_2090 (169 aa).

It belongs to the UPF0251 family.

This chain is UPF0251 protein MM_2090, found in Methanosarcina mazei (strain ATCC BAA-159 / DSM 3647 / Goe1 / Go1 / JCM 11833 / OCM 88) (Methanosarcina frisia).